The primary structure comprises 379 residues: MNEFLPFSRPAMGPEELAAVSEVLQSGWITTGPKNQALEQAFCALTGNQHSIAVSSATAGMHVALMALGIQAGDEVITPSLTWVSTLNMIVLLGAEPVMIDVDHDTLMVTPQAIEAAITPRTKAIIPVHYAGAPVDIDAIRAVADRHGIPVIEDAAHAAGTYYKGSHVGNRGTAIFSFHAIKNMTCAEGGLIVTDDEQLANRMRSLKFHGLGVDAFDRQTLGRAPQAEVISPGYKYNLADINAAIALVQLKKLEKNNARRTEIAERYLTELANTPFLPLSQPAWAHKHAWHLFIVRVDEATCGISRNGLMDDLKAKGIGTGLHFRAAHTQKYYRERYPALVLPNTEWNSDRICSIPLFPTMTDDDVTRVIAALRDVAGY.

An N6-(pyridoxal phosphate)lysine modification is found at lysine 182.

This sequence belongs to the DegT/DnrJ/EryC1 family. ArnB subfamily. Homodimer. Pyridoxal 5'-phosphate serves as cofactor.

The enzyme catalyses UDP-4-amino-4-deoxy-beta-L-arabinose + 2-oxoglutarate = UDP-beta-L-threo-pentopyranos-4-ulose + L-glutamate. It participates in nucleotide-sugar biosynthesis; UDP-4-deoxy-4-formamido-beta-L-arabinose biosynthesis; UDP-4-deoxy-4-formamido-beta-L-arabinose from UDP-alpha-D-glucuronate: step 2/3. Its pathway is bacterial outer membrane biogenesis; lipopolysaccharide biosynthesis. Functionally, catalyzes the conversion of UDP-4-keto-arabinose (UDP-Ara4O) to UDP-4-amino-4-deoxy-L-arabinose (UDP-L-Ara4N). The modified arabinose is attached to lipid A and is required for resistance to polymyxin and cationic antimicrobial peptides. This is UDP-4-amino-4-deoxy-L-arabinose--oxoglutarate aminotransferase from Enterobacter sp. (strain 638).